The primary structure comprises 323 residues: Phospho-N-acetylmuramoyl-pentapeptide-transferase (323 aa).

9 consecutive transmembrane segments (helical) span residues 3–23 (NILL…PALI), 52–72 (MGGL…SWVL), 77–97 (MLPT…LGMW), 121–141 (IVGA…MALH), 145–165 (IGNW…LVGF), 175–195 (LDGL…IVAW), 200–220 (INIA…LIFN), 226–248 (IFMG…ILLH), and 301–321 (IDLT…WVIL).

This sequence belongs to the glycosyltransferase 4 family. MraY subfamily. Mg(2+) serves as cofactor.

Its subcellular location is the cell membrane. It catalyses the reaction UDP-N-acetyl-alpha-D-muramoyl-L-alanyl-gamma-D-glutamyl-L-lysyl-D-alanyl-D-alanine + di-trans,octa-cis-undecaprenyl phosphate = Mur2Ac(oyl-L-Ala-gamma-D-Glu-L-Lys-D-Ala-D-Ala)-di-trans,octa-cis-undecaprenyl diphosphate + UMP. Its pathway is cell wall biogenesis; peptidoglycan biosynthesis. Catalyzes the initial step of the lipid cycle reactions in the biosynthesis of the cell wall peptidoglycan: transfers peptidoglycan precursor phospho-MurNAc-pentapeptide from UDP-MurNAc-pentapeptide onto the lipid carrier undecaprenyl phosphate, yielding undecaprenyl-pyrophosphoryl-MurNAc-pentapeptide, known as lipid I. The sequence is that of Phospho-N-acetylmuramoyl-pentapeptide-transferase from Levilactobacillus brevis (strain ATCC 367 / BCRC 12310 / CIP 105137 / JCM 1170 / LMG 11437 / NCIMB 947 / NCTC 947) (Lactobacillus brevis).